Reading from the N-terminus, the 546-residue chain is Chaperonin GroEL 2 (546 aa).

ATP is bound by residues 30–33, Lys51, 87–91, Gly415, 479–481, and Asp495; these read TLGP, DGTTT, and NAA. Positions 526–546 are disordered; that stretch reads KEDAPMPGGMPGGMGGMGMDM. Gly residues predominate over residues 534 to 546; the sequence is GMPGGMGGMGMDM.

This sequence belongs to the chaperonin (HSP60) family. Forms a cylinder of 14 subunits composed of two heptameric rings stacked back-to-back. Interacts with the co-chaperonin GroES.

The protein localises to the cytoplasm. The enzyme catalyses ATP + H2O + a folded polypeptide = ADP + phosphate + an unfolded polypeptide.. Together with its co-chaperonin GroES, plays an essential role in assisting protein folding. The GroEL-GroES system forms a nano-cage that allows encapsulation of the non-native substrate proteins and provides a physical environment optimized to promote and accelerate protein folding. The protein is Chaperonin GroEL 2 of Burkholderia lata (strain ATCC 17760 / DSM 23089 / LMG 22485 / NCIMB 9086 / R18194 / 383).